The following is a 237-amino-acid chain: Ribonuclease PH (237 aa).

Phosphate is bound by residues R86 and 124–126 (GTR).

It belongs to the RNase PH family. As to quaternary structure, homohexameric ring arranged as a trimer of dimers.

The catalysed reaction is tRNA(n+1) + phosphate = tRNA(n) + a ribonucleoside 5'-diphosphate. Phosphorolytic 3'-5' exoribonuclease that plays an important role in tRNA 3'-end maturation. Removes nucleotide residues following the 3'-CCA terminus of tRNAs; can also add nucleotides to the ends of RNA molecules by using nucleoside diphosphates as substrates, but this may not be physiologically important. Probably plays a role in initiation of 16S rRNA degradation (leading to ribosome degradation) during starvation. This chain is Ribonuclease PH, found in Roseobacter denitrificans (strain ATCC 33942 / OCh 114) (Erythrobacter sp. (strain OCh 114)).